Consider the following 352-residue polypeptide: Phosphate acyltransferase (352 aa).

Residues 328–339 (ESFPGDAREREG) show a composition bias toward basic and acidic residues. The segment at 328 to 352 (ESFPGDAREREGAPAPDAGTERVAS) is disordered.

Belongs to the PlsX family. In terms of assembly, homodimer. Probably interacts with PlsY.

The protein localises to the cytoplasm. The catalysed reaction is a fatty acyl-[ACP] + phosphate = an acyl phosphate + holo-[ACP]. It functions in the pathway lipid metabolism; phospholipid metabolism. Functionally, catalyzes the reversible formation of acyl-phosphate (acyl-PO(4)) from acyl-[acyl-carrier-protein] (acyl-ACP). This enzyme utilizes acyl-ACP as fatty acyl donor, but not acyl-CoA. In Citrifermentans bemidjiense (strain ATCC BAA-1014 / DSM 16622 / JCM 12645 / Bem) (Geobacter bemidjiensis), this protein is Phosphate acyltransferase.